The following is an 884-amino-acid chain: Protein argonaute-4 (884 aa).

A PAZ domain is found at 242–361; sequence PVIEFMCEVL…LPLEVCNIVA (120 aa). A Piwi domain is found at 532–843; the sequence is LIVVILPGKT…VAFRARYHLV (312 aa). Residues 848–870 are disordered; it reads DSAEGSHVSGQSNGRDPQALAKA.

Belongs to the argonaute family. Ago subfamily.

It is found in the cytoplasm. It localises to the P-body. Functionally, required for RNA-mediated gene silencing (RNAi). Binds to short RNAs such as microRNAs (miRNAs) and represses the translation of mRNAs which are complementary to them. Lacks endonuclease activity and does not appear to cleave target mRNAs. The sequence is that of Protein argonaute-4 (ago4) from Xenopus laevis (African clawed frog).